The chain runs to 439 residues: Tryptophan synthase beta chain 2 (439 aa).

Lysine 99 is modified (N6-(pyridoxal phosphate)lysine).

It belongs to the TrpB family. Tetramer of two alpha and two beta chains. It depends on pyridoxal 5'-phosphate as a cofactor.

It catalyses the reaction (1S,2R)-1-C-(indol-3-yl)glycerol 3-phosphate + L-serine = D-glyceraldehyde 3-phosphate + L-tryptophan + H2O. It participates in amino-acid biosynthesis; L-tryptophan biosynthesis; L-tryptophan from chorismate: step 5/5. Functionally, the beta subunit is responsible for the synthesis of L-tryptophan from indole and L-serine. This Corynebacterium efficiens (strain DSM 44549 / YS-314 / AJ 12310 / JCM 11189 / NBRC 100395) protein is Tryptophan synthase beta chain 2 (trpB2).